Consider the following 207-residue polypeptide: Pyrrolidone-carboxylate peptidase (207 aa).

Catalysis depends on residues Glu80, Cys143, and His167.

The protein belongs to the peptidase C15 family. Homotetramer.

The protein localises to the cytoplasm. It catalyses the reaction Release of an N-terminal pyroglutamyl group from a polypeptide, the second amino acid generally not being Pro.. Its function is as follows. Removes 5-oxoproline from various penultimate amino acid residues except L-proline. In Coprothermobacter proteolyticus (strain ATCC 35245 / DSM 5265 / OCM 4 / BT), this protein is Pyrrolidone-carboxylate peptidase.